Reading from the N-terminus, the 822-residue chain is LPS-assembly protein LptD (822 aa).

Positions 1–37 (MRRASRSPFILSPVAHAVSRLVLCATLGWTYAGSGHA) are cleaved as a signal peptide. Residues 38–97 (QVPAPAGGSEVPLGARPPASAPVAAQQETPLKLKSSPALAEEVPNGPGDEGPTFVFGDSV) are disordered.

This sequence belongs to the LptD family. As to quaternary structure, component of the lipopolysaccharide transport and assembly complex. Interacts with LptE and LptA.

It is found in the cell outer membrane. Its function is as follows. Together with LptE, is involved in the assembly of lipopolysaccharide (LPS) at the surface of the outer membrane. This is LPS-assembly protein LptD from Polaromonas sp. (strain JS666 / ATCC BAA-500).